Reading from the N-terminus, the 307-residue chain is Elongation factor Ts (307 aa).

The tract at residues 80–83 is involved in Mg(2+) ion dislocation from EF-Tu; it reads TDFV.

This sequence belongs to the EF-Ts family.

Its subcellular location is the cytoplasm. Its function is as follows. Associates with the EF-Tu.GDP complex and induces the exchange of GDP to GTP. It remains bound to the aminoacyl-tRNA.EF-Tu.GTP complex up to the GTP hydrolysis stage on the ribosome. The polypeptide is Elongation factor Ts (Nitrobacter hamburgensis (strain DSM 10229 / NCIMB 13809 / X14)).